The sequence spans 112 residues: Mitochondrial import inner membrane translocase subunit TIM14-3 (112 aa).

A2 bears the N-acetylalanine mark. Residues I6 to F28 form a helical membrane-spanning segment. In terms of domain architecture, J spans E53 to F112.

It belongs to the TIM14 family. As to quaternary structure, probable component of the PAM complex at least composed of a mitochondrial HSP70 protein, TIMM44 and TIMM14. The complex interacts with the TIMM23 component of the TIM17:23 complex.

It is found in the mitochondrion. The protein resides in the mitochondrion inner membrane. In terms of biological role, component of the PAM complex, a complex required for the translocation of transit peptide-containing proteins from the inner membrane into the mitochondrial matrix in an ATP-dependent manner. In Arabidopsis thaliana (Mouse-ear cress), this protein is Mitochondrial import inner membrane translocase subunit TIM14-3 (TIM14-3).